The chain runs to 798 residues: Shutoff protein (798 aa).

The span at 1–14 (MESTADGDKARGEE) shows a compositional bias: basic and acidic residues. The disordered stretch occupies residues 1–123 (MESTADGDKA…SHSSDSELGC (123 aa)). The segment covering 33–49 (APEDEHPDDGEPDEPAD) has biased composition (acidic residues). Residues 68 to 80 (GGRDAECDGEAAR) show a composition bias toward basic and acidic residues. Residues 86 to 105 (DESSAPTTPSTAVRRSSGES) show a composition bias toward polar residues. Residues 309–376 (LMEVLLQPFA…GRPLYRSARA (68 aa)) form a binding to host EIF4G region. The 119-residue stretch at 379–497 (SVFREPSSIK…AIYALETPTE (119 aa)) folds into the RRM domain. Residue Tyr-711 is modified to Phosphotyrosine; by host. The segment at 740-798 (YADHARGAATSAEPSRALRPTSVATAAGNRTRGCSSARYRLGPTLRRRSNSSWPREWST) is disordered. Positions 789–798 (NSSWPREWST) are enriched in polar residues.

This sequence belongs to the adenoviridae shutoff protein family. As to quaternary structure, monomer. Interacts with hexon protein; this interaction allows chaperoning and trimerization of hexon proteins. Interacts (via N-terminus) with host initiation factor EIF4G (via C-terminus). Interacts (via RRM domain) with viral mRNAs that contain the tripartite leader; this interaction allows ribosome shunting and expression of viral late mRNAs. Post-translationally, might be cleaved by the viral protease. In terms of processing, phosphorylated. Tyrosine phosphorylation enhances preferential binding to tripartite leader mRNAs and allows ribosome shunting. Methylated. Asymmetric dimethylation by host PRMT1 of the Arg/Gly-rich region may regulate shutoff protein binding to hexon and promote the capsid assembly in the nucleus.

The protein localises to the host cytoplasm. Its function is as follows. Protein that inhibits host translation while promoting late viral translation by ribosome shunting. Blocks host cap-dependent translation by binding to eIF4G, displacing MKNK1 from cap initiation complexes and preventing EIF4E phosphorylation. Binds to the tripartite leader sequence of viral late mRNAs and recruits host eIF4G, PABPC1/poly-A binding protein and 40S ribosomes subunits on viral mRNAs, allowing ribosome shunting and efficient translation of late viral mRNAs even though conventional translation via ribosome scanning from the cap has been shut off in the host cell. During assembly, acts as a chaperone protein that helps hexon proteins assembly into trimers. The polypeptide is Shutoff protein (Galliformes (FAdV-10)).